The following is a 112-amino-acid chain: UPF0342 protein SP_1372 (112 aa).

The protein belongs to the UPF0342 family.

The protein is UPF0342 protein SP_1372 of Streptococcus pneumoniae serotype 4 (strain ATCC BAA-334 / TIGR4).